The chain runs to 95 residues: Alpha-conotoxin GeXXA (95 aa).

The first 21 residues, Met1–Ala21, serve as a signal peptide directing secretion. Positions Ala22–Arg45 are excised as a propeptide. 4 disulfides stabilise this stretch: Cys64–Cys73, Cys69–Cys81, Cys74–Cys91, and Cys79–Cys93.

Belongs to the conotoxin D superfamily. In terms of assembly, homodimer. Pseudo-homodimer (identical sequence, different post-translational modifications). Expressed by the venom duct.

Its subcellular location is the secreted. Functionally, alpha-D-conopeptides act as non-competitive inhibitors of nicotinic acetylcholine receptors (nAChR). Through its two C-terminal domains, this homodimeric protein would bind to two nAChR allosteric sites, located outside the nAChR C-loop of the principal binding face and at the adjacent binding interface in a clockwise direction. This toxin has strong inhibitory activity on rat alpha-9-alpha-10 (CHRNA9-CHRNA10) (IC(50)=1.2 nM) and a moderate inhibitory activity on human alpha-7 (CHRNA7) (IC(50)=210 nM), rat alpha-3-beta-2 (CHRNA3-CHRNB2) (IC(50)=498 nM), rat alpha-3-beta-4 (CHRNA3-CHRNB4) (IC(50)=614 nM) and rat alpha-1-beta-1-delta-epsilon (CHRNA1-CHRNB1-CHRNE-CHRND) (IC(50)=743 nM) subtypes. Shows a weaker inhibitory activity on human alpha-9-alpha-10 (IC(50)=28 nM) than on the rat channel. This is explained by a different residue in the probable binding site (His-31 in rat alpha-10 and Leu-31 in human). In Conus generalis (General cone), this protein is Alpha-conotoxin GeXXA.